The following is a 468-amino-acid chain: 6-phospho-beta-galactosidase (468 aa).

D-galactose 6-phosphate is bound by residues Q19, H116, N159, E160, and N297. The active-site Proton donor is the E160. The active-site Nucleophile is the E375. Residues S428, W429, K435, and Y437 each contribute to the D-galactose 6-phosphate site.

The protein belongs to the glycosyl hydrolase 1 family.

It catalyses the reaction a 6-phospho-beta-D-galactoside + H2O = D-galactose 6-phosphate + an alcohol. The protein operates within carbohydrate metabolism; lactose degradation; D-galactose 6-phosphate and beta-D-glucose from lactose 6-phosphate: step 1/1. In Streptococcus pyogenes serotype M2 (strain MGAS10270), this protein is 6-phospho-beta-galactosidase.